A 248-amino-acid chain; its full sequence is Triosephosphate isomerase (248 aa).

2 residues coordinate substrate: Asn-11 and Lys-13. The Electrophile role is filled by His-95. Residue Glu-165 is the Proton acceptor of the active site.

This sequence belongs to the triosephosphate isomerase family. Homodimer.

The protein localises to the cytoplasm. It catalyses the reaction dihydroxyacetone phosphate = methylglyoxal + phosphate. It carries out the reaction D-glyceraldehyde 3-phosphate = dihydroxyacetone phosphate. The protein operates within carbohydrate degradation; glycolysis; D-glyceraldehyde 3-phosphate from glycerone phosphate: step 1/1. Its pathway is carbohydrate biosynthesis; gluconeogenesis. In terms of biological role, triosephosphate isomerase is an extremely efficient metabolic enzyme that catalyzes the interconversion between dihydroxyacetone phosphate (DHAP) and D-glyceraldehyde-3-phosphate (G3P) in glycolysis and gluconeogenesis. Its function is as follows. It is also responsible for the non-negligible production of methylglyoxal a reactive cytotoxic side-product that modifies and can alter proteins, DNA and lipids. In Xenopus tropicalis (Western clawed frog), this protein is Triosephosphate isomerase (tpi1).